The primary structure comprises 490 residues: Betaine aldehyde dehydrogenase (490 aa).

Positions 27 and 93 each coordinate K(+). 150–152 (GAW) lines the NAD(+) pocket. Residue K162 is the Charge relay system of the active site. NAD(+) is bound at residue 176 to 179 (KPSE). Residue V180 coordinates K(+). 230–233 (GTDT) contributes to the NAD(+) binding site. Position 246 (L246) interacts with K(+). The active-site Proton acceptor is the E252. Residues G254, C286, and E387 each contribute to the NAD(+) site. C286 functions as the Nucleophile in the catalytic mechanism. Position 286 is a cysteine sulfenic acid (-SOH) (C286). The K(+) site is built by K457 and G460. Residue E464 is the Charge relay system of the active site.

Belongs to the aldehyde dehydrogenase family. Dimer of dimers. It depends on K(+) as a cofactor.

It carries out the reaction betaine aldehyde + NAD(+) + H2O = glycine betaine + NADH + 2 H(+). Its pathway is amine and polyamine biosynthesis; betaine biosynthesis via choline pathway; betaine from betaine aldehyde: step 1/1. Its function is as follows. Involved in the biosynthesis of the osmoprotectant glycine betaine. Catalyzes the irreversible oxidation of betaine aldehyde to the corresponding acid. The sequence is that of Betaine aldehyde dehydrogenase from Pseudomonas fluorescens (strain ATCC BAA-477 / NRRL B-23932 / Pf-5).